The chain runs to 24 residues: Ascaphin-7 (24 aa).

As to expression, expressed by the skin glands.

Its subcellular location is the secreted. Its function is as follows. Antimicrobial peptide that shows higher potency against Gram-negative bacteria than against Gram-positive bacteria. Has a very week hemolytic activity. This Ascaphus truei (Coastal tailed frog) protein is Ascaphin-7.